A 153-amino-acid chain; its full sequence is Transcriptional repressor NrdR (153 aa).

The segment at 3–33 is a zinc-finger region; it reads CPYCNYKESKVIDSRHTDLKSIRRRRECESC. The region spanning 48–138 is the ATP-cone domain; that stretch reads LMVIKKDNSR…VYRQFKDINT (91 aa).

Belongs to the NrdR family. The cofactor is Zn(2+).

Negatively regulates transcription of bacterial ribonucleotide reductase nrd genes and operons by binding to NrdR-boxes. The protein is Transcriptional repressor NrdR of Clostridioides difficile (strain 630) (Peptoclostridium difficile).